Here is a 63-residue protein sequence, read N- to C-terminus: Large ribosomal subunit protein bL28 (63 aa).

The protein belongs to the bacterial ribosomal protein bL28 family.

This Sulfurihydrogenibium sp. (strain YO3AOP1) protein is Large ribosomal subunit protein bL28.